The chain runs to 738 residues: Putative RNA-binding protein EEED8.10 (738 aa).

One can recognise an RRM domain in the interval 112-201 (RKIVVSNISA…QVMVVSAYVS (90 aa)). Residues 211-237 (LSDDVGSREDTPLSRASSTQSLASGSE) are disordered. The segment covering 224–237 (SRASSTQSLASGSE) has biased composition (polar residues). In terms of domain architecture, F-box spans 239–297 (SFNLGNVPDKILRRVISFLPIHETIRLERVNKKFMEESIKSWELVNKIALARETVFNKQ).

This Caenorhabditis elegans protein is Putative RNA-binding protein EEED8.10.